The chain runs to 593 residues: Aspartate--tRNA(Asp/Asn) ligase (593 aa).

Glutamate 175 provides a ligand contact to L-aspartate. Residues 199 to 202 form an aspartate region; the sequence is QQYK. Arginine 221 and histidine 452 together coordinate L-aspartate. Position 221-223 (221-223) interacts with ATP; sequence RDE. Residue glutamate 486 coordinates ATP. Position 493 (arginine 493) interacts with L-aspartate. 538-541 provides a ligand contact to ATP; it reads GVDR.

The protein belongs to the class-II aminoacyl-tRNA synthetase family. Type 1 subfamily. In terms of assembly, homodimer.

Its subcellular location is the cytoplasm. The enzyme catalyses tRNA(Asx) + L-aspartate + ATP = L-aspartyl-tRNA(Asx) + AMP + diphosphate. In terms of biological role, aspartyl-tRNA synthetase with relaxed tRNA specificity since it is able to aspartylate not only its cognate tRNA(Asp) but also tRNA(Asn). Reaction proceeds in two steps: L-aspartate is first activated by ATP to form Asp-AMP and then transferred to the acceptor end of tRNA(Asp/Asn). The sequence is that of Aspartate--tRNA(Asp/Asn) ligase from Novosphingobium aromaticivorans (strain ATCC 700278 / DSM 12444 / CCUG 56034 / CIP 105152 / NBRC 16084 / F199).